The following is a 70-amino-acid chain: DNA-directed RNA polymerase subunit omega (70 aa).

It belongs to the RNA polymerase subunit omega family. The RNAP catalytic core consists of 2 alpha, 1 beta, 1 beta' and 1 omega subunit. When a sigma factor is associated with the core the holoenzyme is formed, which can initiate transcription.

It catalyses the reaction RNA(n) + a ribonucleoside 5'-triphosphate = RNA(n+1) + diphosphate. In terms of biological role, promotes RNA polymerase assembly. Latches the N- and C-terminal regions of the beta' subunit thereby facilitating its interaction with the beta and alpha subunits. This Staphylococcus saprophyticus subsp. saprophyticus (strain ATCC 15305 / DSM 20229 / NCIMB 8711 / NCTC 7292 / S-41) protein is DNA-directed RNA polymerase subunit omega.